The chain runs to 1251 residues: MASPPESDGFSDVRKVGYLRKPKSMHKRFFVLRAASETGDPARLEYYENEKKWRHKSSAPKRSIPLESCFNINKRADSKNKHLVALYTRDEHFAIAADSEAEQDSWYQALLQLHNRAKGHHDGAAALGAGGGGGSCSGSSGLGEAGEDLSYGDVPPGPAFKEVWQVILKPKGLGQTKNLIGIYRLCLTSKTISFVKLNSEAAAVVLQLMNIRRCGHSENFFFIEVGRSAVTGPGEFWMQVDDSVVAQNMHETILEAMRAMSDEFRPRSKSQSSSNCSNPISVPLRRHHLNNPPPSQVGLTRRSRTESITATSPASMVGGKPGSFRVRASSDGEGTMSRPASVDGSPVSPSTNRTHAHRHRGSARLHPPLNHSRSIPMPASRCSPSATSPVSLSSSSTSGHGSTSDCLFPRRSSASVSGSPSDGGFISSDEYGSSPCDFRSSFRSVTPDSLGHTPPARGEEELSNYICMGGKGPSTLTAPNGHYILSRGGNGHRYTPGTGLGTSPALAGDEASSAADLDNRFRKRTHSAGTSPTITHQKTPSQSSVASIEEYTEMMPAYPPGGGSGGRLPGHRHSAFVPTHSYPEEGLEMHPLERRGGHHRPDSSTLHTDDGYMPMSPGVAPVPSSRKGSGDYMPMSPKSVSAPQQIINPIRRHPQRVDPNGYMMMSPSGGCSPDIGGGPSSSSSSTVPSGSSYGKLWTKGVGAHNSQVLLHPKPPVESSGGKLLPCTGDYMNMSPVGDSNTSSPSDCYYGPEDPQHKPVLSYYSLPRSFKHTQRPGEPEEGARHQHLRLSTSSGRLLYAATADDSSSSTSSDSLGGGYCGARLEPSLPHPHHQVLQPHLPRKVDTAAQTNSRLARPTRLSLGDPKASTLPRAREQQQQQQQQQQQQQQQQQPLLHPPEPKSPGEYVNIEFGSDQPGYLSGPVASRSSPSVRCPSQLQPAPREEETGTEEYMKMDLGPGRRAAWQESTGVEMGRLGPAPPGAASICRPTRAVPSSRGDYMTMQMSCPRQSYVDTSPIAPVSYADMRTGIAAEEVSLPRATMAAAASSSAASASPTGPQGAAELAAHSSLLGGAQGPGGMSAFTRVNLSPNRNQSAKVIRADPQGCRRRHSSETFSSTPSATRVGNTVPFGAGAAIGGSGGSSSSSEDVKRHSSASFENVWLRPGELGGAPKEPAQLCGAAGGLENGLNYIDLDLVKDFKQRPQECTPQPQPPPPPPPHQPLGSSESSSTRRSSEDLSAYASISFQKQPEDLQ.

Ser3 is modified (phosphoserine). The mediates interaction with PHIP stretch occupies residues 3–137 (SPPESDGFSD…GAGGGGGSCS (135 aa)). Positions 12–115 (DVRKVGYLRK…WYQALLQLHN (104 aa)) constitute a PH domain. The residue at position 99 (Ser99) is a Phosphoserine; by CK2. Residues 160 to 264 (FKEVWQVILK…EAMRAMSDEF (105 aa)) form the IRS-type PTB domain. The tract at residues 262–430 (DEFRPRSKSQ…SDGGFISSDE (169 aa)) is disordered. Low complexity predominate over residues 269–281 (KSQSSSNCSNPIS). Ser270 carries the phosphoserine modification. Ser307 bears the Phosphoserine; by RPS6KB1 mark. Residue Ser312 is modified to Phosphoserine; by IKKB, MAPK8 and RPS6KB1. A phosphoserine mark is found at Ser323, Ser330, Ser345, and Ser348. A compositionally biased stretch (basic residues) spans 354–363 (THAHRHRGSA). Low complexity-rich tracts occupy residues 383–404 (SPSA…GSTS) and 412–424 (SSAS…SDGG). Ser419 carries the phosphoserine modification. Thr446 and Thr453 each carry phosphothreonine. Residue Tyr465 is modified to Phosphotyrosine; by INSR. The short motif at 465 to 468 (YICM) is the YXXM motif 1 element. The disordered stretch occupies residues 494–513 (YTPGTGLGTSPALAGDEASS). A Phosphoserine; by RPS6KB1 modification is found at Ser527. The YXXM motif 2 motif lies at 551-554 (YTEM). Residues 594–610 (RRGGHHRPDSSTLHTDD) show a composition bias toward basic and acidic residues. The segment at 594–616 (RRGGHHRPDSSTLHTDDGYMPMS) is disordered. Tyr612 is subject to Phosphotyrosine; by INSR. Positions 612–615 (YMPM) match the YXXM motif 3 motif. Position 629 is a phosphoserine (Ser629). Position 632 is a phosphotyrosine; by INSR (Tyr632). The short motif at 632–635 (YMPM) is the YXXM motif 4 element. A Phosphoserine; by RPS6KB1 modification is found at Ser636. Tyr662 is modified (phosphotyrosine). The short motif at 662–665 (YMMM) is the YXXM motif 5 element. The interval 668–692 (SGGCSPDIGGGPSSSSSSTVPSGSS) is disordered. A YXXM motif 6 motif is present at residues 730–733 (YMNM). Disordered regions lie at residues 734–753 (SPVG…GPED) and 769–946 (FKHT…EETG). The span at 774–783 (RPGEPEEGAR) shows a compositional bias: basic and acidic residues. Ser792 carries the post-translational modification Phosphoserine; by AMPK and SIK2. 2 stretches are compositionally biased toward low complexity: residues 799 to 813 (AATA…SSDS) and 875 to 891 (QQQQ…QQQQ). A Phosphoserine modification is found at Ser901. Phosphotyrosine; by INSR is present on Tyr905. Residues 905 to 907 (YVN) are GRB2-binding. Positions 924-937 (SRSSPSVRCPSQLQ) are enriched in polar residues. Residues Tyr950 and Tyr998 each carry the phosphotyrosine; by INSR modification. 3 consecutive short sequence motifs (YXXM motif) follow at residues 950 to 953 (YMKM), 998 to 1001 (YMTM), and 1021 to 1024 (YADM). 2 disordered regions span residues 1091–1124 (NQSA…RVGN) and 1130–1149 (AGAA…DVKR). Phosphoserine occurs at positions 1109 and 1110. The segment covering 1111 to 1123 (ETFSSTPSATRVG) has biased composition (polar residues). Tyr1188 bears the Phosphotyrosine; by INSR mark. Lys1195 is covalently cross-linked (Glycyl lysine isopeptide (Lys-Gly) (interchain with G-Cter in ubiquitin)). The disordered stretch occupies residues 1195-1251 (KDFKQRPQECTPQPQPPPPPPPHQPLGSSESSSTRRSSEDLSAYASISFQKQPEDLQ). Positions 1207–1218 (QPQPPPPPPPHQ) are enriched in pro residues. Tyr1238 bears the Phosphotyrosine; by INSR mark.

In terms of assembly, interacts with UBTF and PIK3CA. Interacts (via phosphorylated YXXM motifs) with PIK3R1. Interacts with ROCK1 and FER. Interacts (via PH domain) with PHIP. Interacts with GRB2. Interacts with SOCS7. Interacts (via IRS-type PTB domain) with IGF1R and INSR (via the tyrosine-phosphorylated NPXY motif). Interacts with ALK. Interacts with EIF2AK2/PKR. Interacts with GKAP1. Interacts with DGKZ in the absence of insulin; insulin stimulation decreases this interaction. Found in a ternary complex with DGKZ and PIP5K1A in the absence of insulin stimulation. Interacts with SQSTM1; the interaction is disrupted by the presence of tensin TNS2. Interacts with NCK1 (via SH2 domain). Interacts with NCK2 (via SH3 domain). Interacts with SH2B1; this interaction enhances leptin-induced activation of the PI3-kinase pathway. Interacts with DVL2; this interaction promotes the Wnt/beta-catenin signaling pathway. Interacts with JAK1. In terms of processing, serine phosphorylation of IRS1 is a mechanism for insulin resistance. Ser-312 phosphorylation inhibits insulin action through disruption of IRS1 interaction with the insulin receptor. Phosphorylation of Tyr-905 is required for GRB2-binding. Phosphorylated by ALK. Phosphorylated at Ser-270, Ser-307, Ser-636 and Ser-1109 by RPS6KB1; phosphorylation induces accelerated degradation of IRS1. Phosphorylated on tyrosine residues in response to insulin. In skeletal muscles, dephosphorylated on Tyr-612 by TNS2 under anabolic conditions; dephosphorylation results in the proteasomal degradation of IRS1. Post-translationally, ubiquitinated by the Cul7-RING(FBXW8) complex in a mTOR-dependent manner, leading to its degradation: the Cul7-RING(FBXW8) complex recognizes and binds IRS1 previously phosphorylated by S6 kinase (RPS6KB1 or RPS6KB2). Ubiquitinated by TRAF4 through 'Lys-29' linkage; this ubiquitination regulates the interaction of IRS1 with IGFR and IRS1 tyrosine phosphorylation upon IGF1 stimulation. S-nitrosylation at by BLVRB inhibits its activity.

It is found in the cytoplasm. Its subcellular location is the nucleus. Signaling adapter protein that participates in the signal transduction from two prominent receptor tyrosine kinases, insulin receptor/INSR and insulin-like growth factor I receptor/IGF1R. Plays therefore an important role in development, growth, glucose homeostasis as well as lipid metabolism. Upon phosphorylation by the insulin receptor, functions as a signaling scaffold that propagates insulin action through binding to SH2 domain-containing proteins including the p85 regulatory subunit of PI3K, NCK1, NCK2, GRB2 or SHP2. Recruitment of GRB2 leads to the activation of the guanine nucleotide exchange factor SOS1 which in turn triggers the Ras/Raf/MEK/MAPK signaling cascade. Activation of the PI3K/AKT pathway is responsible for most of insulin metabolic effects in the cell, and the Ras/Raf/MEK/MAPK is involved in the regulation of gene expression and in cooperation with the PI3K pathway regulates cell growth and differentiation. Acts a positive regulator of the Wnt/beta-catenin signaling pathway through suppression of DVL2 autophagy-mediated degradation leading to cell proliferation. The sequence is that of Insulin receptor substrate 1 (IRS1) from Chlorocebus aethiops (Green monkey).